The sequence spans 173 residues: Ribosome maturation factor RimM (173 aa).

In terms of domain architecture, PRC barrel spans 94–173 (EGEFYWRDLI…TIEVDWDPGF (80 aa)).

Belongs to the RimM family. In terms of assembly, binds ribosomal protein uS19.

Its subcellular location is the cytoplasm. An accessory protein needed during the final step in the assembly of 30S ribosomal subunit, possibly for assembly of the head region. Essential for efficient processing of 16S rRNA. May be needed both before and after RbfA during the maturation of 16S rRNA. It has affinity for free ribosomal 30S subunits but not for 70S ribosomes. The chain is Ribosome maturation factor RimM from Aeromonas salmonicida (strain A449).